Reading from the N-terminus, the 473-residue chain is Phosphatidylserine synthase 1 (473 aa).

Residues 1-35 (MAACVGSRTLSKDDVNYRLHFRMINEQQVEDITLE) are Cytoplasmic-facing. A helical membrane pass occupies residues 36-56 (FFYRPHTITLLSFTILSLMAF). Topologically, residues 57–72 (AFTRDDSVPEENIWRG) are lumenal. Residues 73–93 (ILSVIFFFLIISVLAFPNGPF) traverse the membrane as a helical segment. The Cytoplasmic portion of the chain corresponds to 94-102 (TRPHPAIWR). A helical transmembrane segment spans residues 103–123 (MVFGLSVLYFLFLVFVLFLNF). The Lumenal segment spans residues 124-186 (EQVKAVMYWL…AMKALLIRSY (63 aa)). A helical membrane pass occupies residues 187-207 (GLCWTISITWELTELFFMHLL). The Cytoplasmic segment spans residues 208-216 (PNFAECWWD). Residues 217 to 237 (QVILDILLCNGGGIWLGMVVC) traverse the membrane as a helical segment. At 238–286 (RFLEMRTYHWASFKDIHTTTGKIKRAVLQFTPASWTYVRWFDPKSSFQR) the chain is on the lumenal side. The helical transmembrane segment at 287-307 (VAGIYLFMIIWQLTELNTFFL) threads the bilayer. At 308–319 (KHIFVFQASHPL) the chain is on the cytoplasmic side. A helical transmembrane segment spans residues 320–342 (SWGRILFIGIITAPTVRQYYAYL). At 343-355 (TDTQCKRVGTQCW) the chain is on the lumenal side. A helical transmembrane segment spans residues 356–376 (VFGVIAFLEAIVCIKFGQDLF). The Cytoplasmic segment spans residues 377-380 (SKTQ). A helical transmembrane segment spans residues 381-401 (ILYVVFWLLCVAFTTFLCLYG). The Lumenal segment spans residues 402-473 (MVWYAEYYGH…SKVTNGIGKK (72 aa)). The segment at 420–473 (EDSPYSPDASWLHSKFSKGADNSPPKHPVNSESHSSRRRNRHSRSKVTNGIGKK) is disordered. Over residues 455–464 (SRRRNRHSRS) the composition is skewed to basic residues.

Belongs to the phosphatidyl serine synthase family.

Its subcellular location is the endoplasmic reticulum membrane. It carries out the reaction a 1,2-diacyl-sn-glycero-3-phosphoethanolamine + L-serine = a 1,2-diacyl-sn-glycero-3-phospho-L-serine + ethanolamine. It catalyses the reaction a 1,2-diacyl-sn-glycero-3-phosphocholine + L-serine = a 1,2-diacyl-sn-glycero-3-phospho-L-serine + choline. It functions in the pathway phospholipid metabolism; phosphatidylserine biosynthesis. Its function is as follows. Catalyzes a base-exchange reaction in which the polar head group of phosphatidylethanolamine (PE) or phosphatidylcholine (PC) is replaced by L-serine. Catalyzes mainly the conversion of phosphatidylcholine but also converts, in vitro and to a lesser extent, phosphatidylethanolamine. In Gallus gallus (Chicken), this protein is Phosphatidylserine synthase 1 (PTDSS1).